The primary structure comprises 398 residues: Acetate kinase (398 aa).

Asn8 serves as a coordination point for Mg(2+). Residue Lys15 coordinates ATP. Arg89 contacts substrate. Catalysis depends on Asp146, which acts as the Proton donor/acceptor. Residues 206–210 (HIGNG), 283–285 (DMR), and 331–335 (GMGEN) each bind ATP. Glu383 contributes to the Mg(2+) binding site.

Belongs to the acetokinase family. As to quaternary structure, homodimer. It depends on Mg(2+) as a cofactor. Mn(2+) is required as a cofactor.

It localises to the cytoplasm. It carries out the reaction acetate + ATP = acetyl phosphate + ADP. It functions in the pathway metabolic intermediate biosynthesis; acetyl-CoA biosynthesis; acetyl-CoA from acetate: step 1/2. Its function is as follows. Catalyzes the formation of acetyl phosphate from acetate and ATP. Can also catalyze the reverse reaction. This is Acetate kinase from Streptococcus pyogenes serotype M12 (strain MGAS2096).